The sequence spans 503 residues: Probable cytosol aminopeptidase (503 aa).

The Mn(2+) site is built by K271 and D276. Residue K283 is part of the active site. Mn(2+) is bound by residues D294, D353, and E355. R357 is an active-site residue.

The protein belongs to the peptidase M17 family. Mn(2+) serves as cofactor.

It is found in the cytoplasm. It catalyses the reaction Release of an N-terminal amino acid, Xaa-|-Yaa-, in which Xaa is preferably Leu, but may be other amino acids including Pro although not Arg or Lys, and Yaa may be Pro. Amino acid amides and methyl esters are also readily hydrolyzed, but rates on arylamides are exceedingly low.. The catalysed reaction is Release of an N-terminal amino acid, preferentially leucine, but not glutamic or aspartic acids.. In terms of biological role, presumably involved in the processing and regular turnover of intracellular proteins. Catalyzes the removal of unsubstituted N-terminal amino acids from various peptides. This Chlorobium phaeobacteroides (strain DSM 266 / SMG 266 / 2430) protein is Probable cytosol aminopeptidase.